The following is a 141-amino-acid chain: Translation initiation factor 2 subunit beta (141 aa).

This sequence belongs to the eIF-2-beta/eIF-5 family. In terms of assembly, heterotrimer composed of an alpha, a beta and a gamma chain.

In terms of biological role, eIF-2 functions in the early steps of protein synthesis by forming a ternary complex with GTP and initiator tRNA. The sequence is that of Translation initiation factor 2 subunit beta from Sulfolobus acidocaldarius (strain ATCC 33909 / DSM 639 / JCM 8929 / NBRC 15157 / NCIMB 11770).